The sequence spans 1463 residues: DNA polymerase III PolC-type (1463 aa).

The Exonuclease domain maps to 425 to 581 (YVVFDVETTG…YDAEATGRLL (157 aa)).

Belongs to the DNA polymerase type-C family. PolC subfamily.

The protein localises to the cytoplasm. The enzyme catalyses DNA(n) + a 2'-deoxyribonucleoside 5'-triphosphate = DNA(n+1) + diphosphate. Functionally, required for replicative DNA synthesis. This DNA polymerase also exhibits 3' to 5' exonuclease activity. The sequence is that of DNA polymerase III PolC-type from Streptococcus pneumoniae serotype 2 (strain D39 / NCTC 7466).